We begin with the raw amino-acid sequence, 381 residues long: Chorismate synthase (381 aa).

Residues Arg-41 and Arg-47 each contribute to the NADP(+) site. Residues 127–129 (RAS), 247–248 (QA), Gly-291, 306–310 (KPIPT), and Arg-332 contribute to the FMN site.

The protein belongs to the chorismate synthase family. As to quaternary structure, homotetramer. FMNH2 is required as a cofactor.

The enzyme catalyses 5-O-(1-carboxyvinyl)-3-phosphoshikimate = chorismate + phosphate. Its pathway is metabolic intermediate biosynthesis; chorismate biosynthesis; chorismate from D-erythrose 4-phosphate and phosphoenolpyruvate: step 7/7. Its function is as follows. Catalyzes the anti-1,4-elimination of the C-3 phosphate and the C-6 proR hydrogen from 5-enolpyruvylshikimate-3-phosphate (EPSP) to yield chorismate, which is the branch point compound that serves as the starting substrate for the three terminal pathways of aromatic amino acid biosynthesis. This reaction introduces a second double bond into the aromatic ring system. This Anaeromyxobacter sp. (strain K) protein is Chorismate synthase.